The following is a 396-amino-acid chain: uncharacterized protein (396 aa).

11 helical membrane-spanning segments follow: residues serine 7–leucine 27, alanine 36–leucine 56, valine 62–isoleucine 82, leucine 94–phenylalanine 114, valine 159–leucine 179, isoleucine 218–tyrosine 238, glycine 250–phenylalanine 270, threonine 285–valine 305, leucine 310–glycine 330, isoleucine 340–alanine 360, and valine 367–phenylalanine 387.

It is found in the cell membrane. This is an uncharacterized protein from Bacillus subtilis (strain 168).